The following is a 309-amino-acid chain: Ferrochelatase (309 aa).

2 residues coordinate Fe cation: His187 and Glu265.

It belongs to the ferrochelatase family.

The protein localises to the cytoplasm. The enzyme catalyses heme b + 2 H(+) = protoporphyrin IX + Fe(2+). It functions in the pathway porphyrin-containing compound metabolism; protoheme biosynthesis; protoheme from protoporphyrin-IX: step 1/1. Its function is as follows. Catalyzes the ferrous insertion into protoporphyrin IX. In Nitratiruptor sp. (strain SB155-2), this protein is Ferrochelatase.